Reading from the N-terminus, the 130-residue chain is Type VII secretion system extracellular protein C (130 aa).

Belongs to the EsxC family. In terms of assembly, forms both homodimers and heterodimers with EsxA. Homodimerization is calcium-dependent.

It localises to the secreted. This Staphylococcus aureus (strain USA300) protein is Type VII secretion system extracellular protein C.